A 158-amino-acid chain; its full sequence is ATP synthase subunit beta, mitochondrial (158 aa).

Belongs to the ATPase alpha/beta chains family. In terms of assembly, F-type ATPases have 2 components, CF(1) - the catalytic core - and CF(0) - the membrane proton channel. CF(1) has five subunits: alpha(3), beta(3), gamma(1), delta(1), epsilon(1). CF(0) has three main subunits: a, b and c.

The protein resides in the mitochondrion. It localises to the mitochondrion inner membrane. The catalysed reaction is ATP + H2O + 4 H(+)(in) = ADP + phosphate + 5 H(+)(out). In terms of biological role, mitochondrial membrane ATP synthase (F(1)F(0) ATP synthase or Complex V) produces ATP from ADP in the presence of a proton gradient across the membrane which is generated by electron transport complexes of the respiratory chain. F-type ATPases consist of two structural domains, F(1) - containing the extramembraneous catalytic core, and F(0) - containing the membrane proton channel, linked together by a central stalk and a peripheral stalk. During catalysis, ATP synthesis in the catalytic domain of F(1) is coupled via a rotary mechanism of the central stalk subunits to proton translocation. Subunits alpha and beta form the catalytic core in F(1). Rotation of the central stalk against the surrounding alpha(3)beta(3) subunits leads to hydrolysis of ATP in three separate catalytic sites on the beta subunits. This chain is ATP synthase subunit beta, mitochondrial, found in Schizaphis graminum (Green bug aphid).